The sequence spans 478 residues: Probable glycine dehydrogenase (decarboxylating) subunit 2 (478 aa).

The residue at position 264 (Lys264) is an N6-(pyridoxal phosphate)lysine.

It belongs to the GcvP family. C-terminal subunit subfamily. In terms of assembly, the glycine cleavage system is composed of four proteins: P, T, L and H. In this organism, the P 'protein' is a heterodimer of two subunits. Requires pyridoxal 5'-phosphate as cofactor.

The catalysed reaction is N(6)-[(R)-lipoyl]-L-lysyl-[glycine-cleavage complex H protein] + glycine + H(+) = N(6)-[(R)-S(8)-aminomethyldihydrolipoyl]-L-lysyl-[glycine-cleavage complex H protein] + CO2. In terms of biological role, the glycine cleavage system catalyzes the degradation of glycine. The P protein binds the alpha-amino group of glycine through its pyridoxal phosphate cofactor; CO(2) is released and the remaining methylamine moiety is then transferred to the lipoamide cofactor of the H protein. The protein is Probable glycine dehydrogenase (decarboxylating) subunit 2 of Endomicrobium trichonymphae.